The following is a 92-amino-acid chain: uncharacterized protein (92 aa).

A run of 3 helical transmembrane segments spans residues 1–21 (MEVL…GVIL), 29–49 (IIML…CYYL), and 51–71 (IAIV…LGYL).

The protein localises to the cell membrane. This is an uncharacterized protein from Methanocaldococcus jannaschii (strain ATCC 43067 / DSM 2661 / JAL-1 / JCM 10045 / NBRC 100440) (Methanococcus jannaschii).